A 1465-amino-acid chain; its full sequence is Claspin (1465 aa).

The segment covering 1–12 (MSESLAETAAAA) has biased composition (low complexity). 3 disordered regions span residues 1 to 490 (MSES…KAKV), 544 to 566 (ATAL…GLRM), and 585 to 636 (ATEF…TEDM). A phosphoserine mark is found at S45, S49, S52, S64, S75, S109, and S114. Residues 121 to 133 (QAEKKTQKEEGKQ) are compositionally biased toward basic and acidic residues. Residues 154–163 (KSNKTKKAVK) are compositionally biased toward basic residues. Positions 205–216 (EYDHHQQHEKPA) are enriched in basic and acidic residues. Over residues 217-228 (KTQKSKKLAKKQ) the composition is skewed to basic residues. Basic and acidic residues-rich tracts occupy residues 229-246 (KQQE…EKKK), 254-263 (KKSDKSKIDS), 273-286 (EDLK…EPQK), and 296-335 (TNKD…EQIV). A coiled-coil region spans residues 260–281 (KIDSLMDNEEDAGEDLKMYQED). Positions 336-346 (KPKKMAKKNKQ) are enriched in basic residues. A phosphoserine mark is found at S350 and S354. The span at 358-373 (QNEKVDQDHDLKKMSS) shows a compositional bias: basic and acidic residues. The span at 375 to 388 (NELEMGSDKEDQEM) shows a compositional bias: acidic residues. Residues S381, S404, S406, S432, S434, S444, S456, S458, and S468 each carry the phosphoserine modification. Residues 400–417 (QRMDSESEDEIPKTESEK) show a composition bias toward basic and acidic residues. A compositionally biased stretch (acidic residues) spans 432-441 (SESEPEETAE). Over residues 456-470 (SESEPELDNPEESAG) the composition is skewed to acidic residues. Residues 564–587 (LRMTREELEAYAKLMEDRAKEATE) are a coiled coil. The span at 594-606 (ESDEEDDSENEEP) shows a compositional bias: acidic residues. Residue T693 is modified to Phosphothreonine. A coiled-coil region spans residues 839–874 (LITKKRMEDLRKKQAEEQEKMAEDEEEGMDVDEEYE). Basic and acidic residues predominate over residues 845-859 (MEDLRKKQAEEQEKM). The tract at residues 845-977 (MEDLRKKQAE…LDLLQTPKPS (133 aa)) is disordered. Composition is skewed to acidic residues over residues 860–875 (AEDE…EYEP), 913–942 (ADED…EANP), and 960–969 (DDNSDEDDLD). S963 carries the post-translational modification Phosphoserine. Residue T973 is modified to Phosphothreonine. Residue S990 is modified to Phosphoserine. Residues 1058–1154 (CSGTFATQLP…AEPVEEIPET (97 aa)) form a disordered region. The span at 1067–1076 (PSQAPTQQPE) shows a compositional bias: low complexity. Phosphoserine occurs at positions 1093 and 1094. Acidic residues predominate over residues 1094–1103 (SDEEAQEDAL). Residues 1109–1123 (RNKKLTKKRPKKKAK) are compositionally biased toward basic residues. Residues 1127 to 1154 (SDDEDSDDEVEEFDEESDAEPVEEIPET) are compositionally biased toward acidic residues. Position 1287 is a phosphoserine (S1287).

This sequence belongs to the claspin family. Post-translationally, phosphorylated in response to DNA damage by IR and HU treatment. Phosphorylation does not require mei-41 or tefu. As to expression, detected in the ovary but not in the testis (at protein level).

It is found in the nucleus. In terms of biological role, required for checkpoint signaling in response to DNA replication stress; either resulting from normal embryogenesis or induced by the DNA synthesis inhibitor hydroxyurea (HU). It is not required for the G2 arrest resulting from DNA double strand breaks induced by ionizing irradiation (IR). Necessary for the timely phosphorylation of Cdk1 at the mid-blastula transition. May have a minor role in maintaining genomic stability in mitotic cells. This chain is Claspin, found in Drosophila melanogaster (Fruit fly).